Here is a 40-residue protein sequence, read N- to C-terminus: Beta/delta-ctenitoxin-Pr1a (40 aa).

Intrachain disulfides connect cysteine 1/cysteine 15, cysteine 8/cysteine 21, cysteine 14/cysteine 31, and cysteine 23/cysteine 29.

Belongs to the neurotoxin 03 (Tx2) family. 05 subfamily. Expressed by the venom gland.

It localises to the secreted. Its function is as follows. Potent insecticidal toxin that binds to two distinct sites in insect sodium channels, with close affinity (Kd1=34.7 pM and Kd2=35.1 pM). Its association is rather fast (1.4 and 8.5 minutes, respectively for sites 1 and 2) and its dissociation is a slower process (5.4 and 32.8 minutes, respectively). On rat brain synaptosomes the toxin partially competes (~30%) with the beta-toxin CssIV, but does not compete with the alpha-toxin AaII, nor with the beta-toxin Ts VII. On cockroach nerve cord synaptosomes, the toxin does not compete with the anti-insect toxin LqqIT1, but it competes with the 'alpha-like' toxin BomIV (IC(50)=80 pM). In cockroach neurons, the toxin inhibits the inactivation of sodium channels and it shifts the sodium channel activation to hyperpolarizing potentials. Hence, it behaves like an 'alpha-like' toxin and binds preferentially to site 3 on the insect Nav channel, located on the domain IV. The toxin may also inhibit the N-methyl-D-aspartate (NMDA)-subtype of ionotropic glutamate receptor (GRIN). In vivo, the toxin causes excitatory effects on insects. This is Beta/delta-ctenitoxin-Pr1a from Phoneutria reidyi (Brazilian Amazonian armed spider).